The following is a 156-amino-acid chain: ATP synthase subunit b (156 aa).

The helical transmembrane segment at 11 to 31 (AIAFAIFVMFCMKFVWPPLIG) threads the bilayer.

The protein belongs to the ATPase B chain family. F-type ATPases have 2 components, F(1) - the catalytic core - and F(0) - the membrane proton channel. F(1) has five subunits: alpha(3), beta(3), gamma(1), delta(1), epsilon(1). F(0) has three main subunits: a(1), b(2) and c(10-14). The alpha and beta chains form an alternating ring which encloses part of the gamma chain. F(1) is attached to F(0) by a central stalk formed by the gamma and epsilon chains, while a peripheral stalk is formed by the delta and b chains.

The protein localises to the cell inner membrane. Functionally, f(1)F(0) ATP synthase produces ATP from ADP in the presence of a proton or sodium gradient. F-type ATPases consist of two structural domains, F(1) containing the extramembraneous catalytic core and F(0) containing the membrane proton channel, linked together by a central stalk and a peripheral stalk. During catalysis, ATP synthesis in the catalytic domain of F(1) is coupled via a rotary mechanism of the central stalk subunits to proton translocation. In terms of biological role, component of the F(0) channel, it forms part of the peripheral stalk, linking F(1) to F(0). This Psychrobacter cryohalolentis (strain ATCC BAA-1226 / DSM 17306 / VKM B-2378 / K5) protein is ATP synthase subunit b.